A 121-amino-acid polypeptide reads, in one-letter code: Ribosome-binding factor A (121 aa).

It belongs to the RbfA family. As to quaternary structure, monomer. Binds 30S ribosomal subunits, but not 50S ribosomal subunits or 70S ribosomes.

Its subcellular location is the cytoplasm. Functionally, one of several proteins that assist in the late maturation steps of the functional core of the 30S ribosomal subunit. Associates with free 30S ribosomal subunits (but not with 30S subunits that are part of 70S ribosomes or polysomes). Required for efficient processing of 16S rRNA. May interact with the 5'-terminal helix region of 16S rRNA. The protein is Ribosome-binding factor A of Lactobacillus helveticus (strain DPC 4571).